The primary structure comprises 305 residues: Phosphoribosylaminoimidazole-succinocarboxamide synthase (305 aa).

The protein belongs to the SAICAR synthetase family.

The enzyme catalyses 5-amino-1-(5-phospho-D-ribosyl)imidazole-4-carboxylate + L-aspartate + ATP = (2S)-2-[5-amino-1-(5-phospho-beta-D-ribosyl)imidazole-4-carboxamido]succinate + ADP + phosphate + 2 H(+). It functions in the pathway purine metabolism; IMP biosynthesis via de novo pathway; 5-amino-1-(5-phospho-D-ribosyl)imidazole-4-carboxamide from 5-amino-1-(5-phospho-D-ribosyl)imidazole-4-carboxylate: step 1/2. This chain is Phosphoribosylaminoimidazole-succinocarboxamide synthase, found in Tropheryma whipplei (strain Twist) (Whipple's bacillus).